The sequence spans 299 residues: Farnesyl diphosphate synthase (299 aa).

Isopentenyl diphosphate-binding residues include lysine 45, arginine 48, and histidine 77. 2 residues coordinate Mg(2+): aspartate 84 and aspartate 90. (2E)-geranyl diphosphate is bound at residue arginine 95. Arginine 96 contributes to the isopentenyl diphosphate binding site. (2E)-geranyl diphosphate-binding residues include lysine 181, threonine 182, glutamine 220, and lysine 237.

The protein belongs to the FPP/GGPP synthase family. It depends on Mg(2+) as a cofactor.

It is found in the cytoplasm. It carries out the reaction isopentenyl diphosphate + (2E)-geranyl diphosphate = (2E,6E)-farnesyl diphosphate + diphosphate. The protein is Farnesyl diphosphate synthase (ispA) of Escherichia coli (strain K12).